A 1035-amino-acid polypeptide reads, in one-letter code: Beta-galactosidase (1035 aa).

Positions 101 and 199 each coordinate substrate. D199 is a binding site for Na(+). Mg(2+)-binding residues include E415, H417, and E460. Substrate-binding positions include E460 and 540-543 (EYAH). The Proton donor role is filled by E460. The Nucleophile role is filled by E540. N600 contributes to the Mg(2+) binding site. Residues F604 and N607 each contribute to the Na(+) site. Substrate-binding residues include N607 and W1011.

It belongs to the glycosyl hydrolase 2 family. Homotetramer. Requires Mg(2+) as cofactor. The cofactor is Na(+).

It carries out the reaction Hydrolysis of terminal non-reducing beta-D-galactose residues in beta-D-galactosides.. The chain is Beta-galactosidase from Psychromonas ingrahamii (strain DSM 17664 / CCUG 51855 / 37).